The following is a 430-amino-acid chain: MPHYQVVKGARDIFPDEILQWKHVEGVIHRLAALYGFNEIRTPVFEYTELFQRSIGSSTDIVGKEMFSFLPDPSGRSITLRPEMTAGVMRAALQKNLLAAAPVQKLYYISELFRKERPQAGRQRQFSQFGAELLGVSSPAAVAEVITFMMHVFEDLGLQGLKLRINTLGNMDDRKRYRDALRNYLAPCYEQLDDASKERFEKNPLRILDSKNPEMQQIVKDAPKLYDYLGREALDDFEKVLFYLSARGIPFQIDHRLVRGLDYYSYTAFEVTSSALGAQDALGGGGRYDSLAVELGSSGEVPASGFAVGMERLLIAMQKQGLFSDLDAAAPSVFVIVQQEELFDQALEIVTTLRRAGISAVIDLAGRSMKAQLREANRMNAANALFVGSDELASGKCTMKDLRSSLQDEYFLEEIIDKFRKPEPLNRLRS.

The protein belongs to the class-II aminoacyl-tRNA synthetase family. As to quaternary structure, homodimer.

It localises to the cytoplasm. It carries out the reaction tRNA(His) + L-histidine + ATP = L-histidyl-tRNA(His) + AMP + diphosphate + H(+). This Chlorobium limicola (strain DSM 245 / NBRC 103803 / 6330) protein is Histidine--tRNA ligase.